The primary structure comprises 265 residues: Hydroxyethylthiazole kinase (265 aa).

Residue Met-50 participates in substrate binding. 2 residues coordinate ATP: Arg-125 and Thr-171. Gly-198 contacts substrate.

The protein belongs to the Thz kinase family. Mg(2+) is required as a cofactor.

The catalysed reaction is 5-(2-hydroxyethyl)-4-methylthiazole + ATP = 4-methyl-5-(2-phosphooxyethyl)-thiazole + ADP + H(+). Its pathway is cofactor biosynthesis; thiamine diphosphate biosynthesis; 4-methyl-5-(2-phosphoethyl)-thiazole from 5-(2-hydroxyethyl)-4-methylthiazole: step 1/1. Its function is as follows. Catalyzes the phosphorylation of the hydroxyl group of 4-methyl-5-beta-hydroxyethylthiazole (THZ). This Salmonella schwarzengrund (strain CVM19633) protein is Hydroxyethylthiazole kinase.